Here is a 445-residue protein sequence, read N- to C-terminus: MRLSRYFLPVLKEAPSDAQIVSHQLMLRAGMIRQEAAGIYAWLPLGLRVLKKVERIVREEMDRAGAIELLMPTIQLADLWRESGRYDDYGDEMLRITDRHKRDLLYGPTAEEVVTDIFRASVKSYKDLPKNLYNIQWKFRDERRPRFGVMRGREFLMKDAYSFDLDAEGARKAYNRMFVAYLNLFSRMGLKAVPMRADTGPIGGDLSHEFIVLAETGESAVFCHKDLVEMAAPGPDIDWYGDLQPLVNERTALYAATEEMHDEAAFAALPEGDRLSARGIEVGHIFSFGTKYSEPMKALVTGPDGKDVPVQMGSYGVGVSRLLGAIIEASHDEGGIIWPESVAPFDVGVINMRQGDAACDEACETAYKALQAAGRDVLYDDNDTRGGAKFATMDLIGVPWQLIVGPKGIAEGVVELKNRKTGERHSAPLAEVIAQLSAQNPGKAA.

It belongs to the class-II aminoacyl-tRNA synthetase family. ProS type 2 subfamily. Homodimer.

The protein localises to the cytoplasm. It catalyses the reaction tRNA(Pro) + L-proline + ATP = L-prolyl-tRNA(Pro) + AMP + diphosphate. In terms of biological role, catalyzes the attachment of proline to tRNA(Pro) in a two-step reaction: proline is first activated by ATP to form Pro-AMP and then transferred to the acceptor end of tRNA(Pro). The polypeptide is Proline--tRNA ligase (Caulobacter sp. (strain K31)).